Here is a 182-residue protein sequence, read N- to C-terminus: MIAQNMTIFFWGVCLLTSGWATYSEASVPENLDKSIDELKAYYIKDDHEIHNAHPVFLRVLKDLKVNLEEPEQNLLMSIIMDTYSRIFTRMENDSLDEATKERIAHVQEHLKKLRENYFPGKSAELKTYAETLWAIKEDDPVIQRKALFELKRVYREATLLKNLKNKERRRRQAKNTKNLKS.

Residues 1–21 (MIAQNMTIFFWGVCLLTSGWA) form the signal peptide. Asn-93 is a glycosylation site (N-linked (GlcNAc...) asparagine).

The protein belongs to the type II (or gamma) interferon family. In terms of assembly, homodimer. Highly expressed in spleen. Also detected at lower levels in brain, gill, kidney, heart, intestine and muscle. In immune cell populations, has highest expression in peripheral blood leukocytes and splenocytes. Detected in kidney-derived monocytes, neutrophils, macrophages and leukocytes.

It localises to the secreted. Cytokine which binds to interferon gamma receptor 1-like (ifngr1l). Has activating effects on primary macrophages and neutrophils. Induces nitric oxide production and phagocytic responses in macrophages. Primes macrophages and neutrophils for production of reactive oxygen intermediates (ROI). Stimulates phosphorylation and nuclear localization of the JAK/STAT signal transducer stat1. Promotes increased expression of a number of genes important for macrophage activity, including the interferon regulatory factors irf1, irf2, irf8 and irf9. This Carassius auratus (Goldfish) protein is Interferon gamma 1.